The sequence spans 354 residues: Probable L-ascorbate-6-phosphate lactonase UlaG (354 aa).

It belongs to the UlaG family. The cofactor is a divalent metal cation.

The protein resides in the cytoplasm. The enzyme catalyses L-ascorbate 6-phosphate + H2O = 3-dehydro-L-gulonate 6-phosphate. It functions in the pathway cofactor degradation; L-ascorbate degradation; D-xylulose 5-phosphate from L-ascorbate: step 1/4. Probably catalyzes the hydrolysis of L-ascorbate-6-P into 3-keto-L-gulonate-6-P. Is essential for L-ascorbate utilization under anaerobic conditions. The chain is Probable L-ascorbate-6-phosphate lactonase UlaG from Escherichia coli O139:H28 (strain E24377A / ETEC).